We begin with the raw amino-acid sequence, 233 residues long: Large ribosomal subunit protein uL1 (233 aa).

This sequence belongs to the universal ribosomal protein uL1 family. Part of the 50S ribosomal subunit.

In terms of biological role, binds directly to 23S rRNA. The L1 stalk is quite mobile in the ribosome, and is involved in E site tRNA release. Functionally, protein L1 is also a translational repressor protein, it controls the translation of the L11 operon by binding to its mRNA. This is Large ribosomal subunit protein uL1 from Geobacillus sp. (strain WCH70).